Here is a 208-residue protein sequence, read N- to C-terminus: Peptidyl-tRNA hydrolase 2 (208 aa).

Residues 32-45 are compositionally biased toward low complexity; the sequence is SNASSTKKSSATLL. The disordered stretch occupies residues 32 to 81; sequence SNASSTKKSSATLLRSKEMKEGKLHNDTDEEESESEDESDEDEDIESTSL. Over residues 46-58 the composition is skewed to basic and acidic residues; the sequence is RSKEMKEGKLHND. Over residues 59–77 the composition is skewed to acidic residues; that stretch reads TDEEESESEDESDEDEDIE. Residue Lys152 forms a Glycyl lysine isopeptide (Lys-Gly) (interchain with G-Cter in ubiquitin) linkage.

It belongs to the PTH2 family.

Its subcellular location is the cytoplasm. The enzyme catalyses an N-acyl-L-alpha-aminoacyl-tRNA + H2O = an N-acyl-L-amino acid + a tRNA + H(+). Its function is as follows. The natural substrate for this enzyme may be peptidyl-tRNAs which drop off the ribosome during protein synthesis. The protein is Peptidyl-tRNA hydrolase 2 of Saccharomyces cerevisiae (strain ATCC 204508 / S288c) (Baker's yeast).